The chain runs to 145 residues: Ribonuclease HI (145 aa).

Residues Met-1–Ala-142 form the RNase H type-1 domain. The Mg(2+) site is built by Asp-10, Glu-48, Asp-70, and Asp-134.

This sequence belongs to the RNase H family. Monomer. Mg(2+) serves as cofactor.

It is found in the cytoplasm. The catalysed reaction is Endonucleolytic cleavage to 5'-phosphomonoester.. Endonuclease that specifically degrades the RNA of RNA-DNA hybrids. This Neisseria meningitidis serogroup A / serotype 4A (strain DSM 15465 / Z2491) protein is Ribonuclease HI.